The following is a 284-amino-acid chain: UPF0276 protein Ping_0944 (284 aa).

Belongs to the UPF0276 family.

The polypeptide is UPF0276 protein Ping_0944 (Psychromonas ingrahamii (strain DSM 17664 / CCUG 51855 / 37)).